Here is a 614-residue protein sequence, read N- to C-terminus: Leucine-rich repeat and immunoglobulin-like domain-containing nogo receptor-interacting protein 1 (614 aa).

Positions 1-35 (MLAGGVRSMPSPLLACWQPILLLVLGSVLSGSATG) are cleaved as a signal peptide. 2 disulfides stabilise this stretch: C36–C42 and C40–C51. An LRRNT domain is found at 36–65 (CPPRCECSAQDRAVLCHRKRFVAVPEGIPT). At 36–555 (CPPRCECSAQ…FDIKTLIIAT (520 aa)) the chain is on the extracellular side. LRR repeat units lie at residues 66 to 87 (ETRLLDLGKNRIKTLNQDEFAS), 90 to 111 (HLEELELNENIVSAVEPGAFNN), 114 to 135 (NLRTLGLRSNRLKLIPLGVFTG), 138 to 159 (NLTKLDISENKIVILLDYMFQD), 162 to 183 (NLKSLEVGDNDLVYISHRAFSG), 186 to 207 (SLEQLTLEKCNLTSIPTEALSH), 210 to 231 (GLIVLRLRHLNINAIRDYSFKR), 258 to 279 (NLTSLSITHCNLTAVPYLAVRH), 282 to 303 (YLRFLNLSYNPISTIEGSMLHE), 306 to 327 (RLQEIQLVGGQLAVVEPYAFRG), and 330 to 351 (YLRVLNVSGNQLTTLEESVFHS). N-linked (GlcNAc...) asparagine glycosylation is present at N138. An N-linked (GlcNAc...) asparagine glycan is attached at N196. N-linked (GlcNAc...) asparagine glycosylation is found at N258, N268, and N287. N335 is a glycosylation site (N-linked (GlcNAc...) asparagine). The 55-residue stretch at 363 to 417 (NPLACDCRLLWVFRRRWRLNFNRQQPTCATPEFVQGKEFKDFPDVLLPNYFTCRR) folds into the LRRCT domain. Intrachain disulfides connect C367–C390, C369–C415, and C440–C491. An Ig-like C2-type domain is found at 405–507 (PDVLLPNYFT…GNDSMPAHLH (103 aa)). N-linked (GlcNAc...) asparagine glycans are attached at residues N486, N499, N520, and N536. The chain crosses the membrane as a helical span at residues 556 to 576 (TMGFISFLGVVLFCLVLLFLW). At 577–614 (SRGKGNTKHNIEIEYVPRKSDAGISSADAPRKFNMKMI) the chain is on the cytoplasmic side. Residue S596 is modified to Phosphoserine.

As to quaternary structure, homotetramer. Forms a ternary complex with RTN4R/NGFR and RTN4R/TNFRSF19. Interacts with NGRF, RTN4R and MYT1L. Post-translationally, N-glycosylated. Contains predominantly high-mannose glycans.

The protein localises to the cell membrane. Functionally, functional component of the Nogo receptor signaling complex (RTN4R/NGFR) in RhoA activation responsible for some inhibition of axonal regeneration by myelin-associated factors. Is also an important negative regulator of oligodentrocyte differentiation and axonal myelination. Acts in conjunction with RTN4 and RTN4R in regulating neuronal precursor cell motility during cortical development. In Pongo abelii (Sumatran orangutan), this protein is Leucine-rich repeat and immunoglobulin-like domain-containing nogo receptor-interacting protein 1 (LINGO1).